We begin with the raw amino-acid sequence, 467 residues long: Glycogen synthase kinase-3 (467 aa).

Residues 1 to 20 show a composition bias toward basic and acidic residues; that stretch reads MSSKDQILEKDKKETDDNGN. Residues 1–42 form a disordered region; the sequence is MSSKDQILEKDKKETDDNGNKKTTTTTSSSSSSSSSSKPRSN. The segment covering 23 to 37 has biased composition (low complexity); it reads TTTTTSSSSSSSSSS. The region spanning 56–339 is the Protein kinase domain; the sequence is YITEGVIGNG…PVEICAHPFF (284 aa). Residues 62–70 and lysine 85 contribute to the ATP site; that span reads IGNGSFGVV. Aspartate 179 serves as the catalytic Proton acceptor. 2 positions are modified to phosphotyrosine; by zakA: tyrosine 214 and tyrosine 220. Residues 400-467 form a disordered region; that stretch reads SSNQSSSSNS…TTTTTTTSNH (68 aa).

The protein belongs to the protein kinase superfamily. CMGC Ser/Thr protein kinase family. GSK-3 subfamily. Mg(2+) serves as cofactor.

It catalyses the reaction L-seryl-[tau protein] + ATP = O-phospho-L-seryl-[tau protein] + ADP + H(+). It carries out the reaction L-threonyl-[tau protein] + ATP = O-phospho-L-threonyl-[tau protein] + ADP + H(+). Inhibited by lithium. Lithium inhibition is competitive with respect to magnesium but non-competitive with respect to the peptide substrate. Functionally, during cellular differentiation, may mediate an extracellular cyclic AMP stimulated signal transduction pathway that regulates prespore and prestalk B-cell proportions through inhibition of stalk cell formation and induction of prespore cell differentiation. The cAMP receptor carC appears to activate gskA via the tyrosine kinases zakA and zak2, to stimulate prespore differentiation, while carD appears to negatively regulate gskA, to promote prestalk formation. The chain is Glycogen synthase kinase-3 (gskA) from Dictyostelium discoideum (Social amoeba).